A 78-amino-acid polypeptide reads, in one-letter code: Exodeoxyribonuclease 7 small subunit (78 aa).

Belongs to the XseB family. In terms of assembly, heterooligomer composed of large and small subunits.

The protein localises to the cytoplasm. It carries out the reaction Exonucleolytic cleavage in either 5'- to 3'- or 3'- to 5'-direction to yield nucleoside 5'-phosphates.. Bidirectionally degrades single-stranded DNA into large acid-insoluble oligonucleotides, which are then degraded further into small acid-soluble oligonucleotides. The polypeptide is Exodeoxyribonuclease 7 small subunit (Pediococcus pentosaceus (strain ATCC 25745 / CCUG 21536 / LMG 10740 / 183-1w)).